A 272-amino-acid polypeptide reads, in one-letter code: Formamidopyrimidine-DNA glycosylase (272 aa).

The active-site Schiff-base intermediate with DNA is the P2. E3 serves as the catalytic Proton donor. The active-site Proton donor; for beta-elimination activity is K58. Residues H94, R112, and R153 each coordinate DNA. The FPG-type zinc finger occupies F238–R272. The active-site Proton donor; for delta-elimination activity is R262.

Belongs to the FPG family. Monomer. Requires Zn(2+) as cofactor.

The catalysed reaction is Hydrolysis of DNA containing ring-opened 7-methylguanine residues, releasing 2,6-diamino-4-hydroxy-5-(N-methyl)formamidopyrimidine.. It carries out the reaction 2'-deoxyribonucleotide-(2'-deoxyribose 5'-phosphate)-2'-deoxyribonucleotide-DNA = a 3'-end 2'-deoxyribonucleotide-(2,3-dehydro-2,3-deoxyribose 5'-phosphate)-DNA + a 5'-end 5'-phospho-2'-deoxyribonucleoside-DNA + H(+). Its function is as follows. Involved in base excision repair of DNA damaged by oxidation or by mutagenic agents. Acts as a DNA glycosylase that recognizes and removes damaged bases. Has a preference for oxidized purines, such as 7,8-dihydro-8-oxoguanine (8-oxoG). Has AP (apurinic/apyrimidinic) lyase activity and introduces nicks in the DNA strand. Cleaves the DNA backbone by beta-delta elimination to generate a single-strand break at the site of the removed base with both 3'- and 5'-phosphates. The protein is Formamidopyrimidine-DNA glycosylase of Burkholderia mallei (strain NCTC 10229).